The sequence spans 515 residues: Chromosomal replication initiator protein DnaA (515 aa).

The interval 1–89 (MVADQAVLSS…LLAISIDANL (89 aa)) is domain I, interacts with DnaA modulators. The segment at 89–172 (LQPPRTPSSE…APPSTSAETS (84 aa)) is domain II. Disordered regions lie at residues 90-130 (QPPR…SRRA) and 142-171 (PPADVVPAANAAPNGNGKPTPAPPSTSAET). 2 stretches are compositionally biased toward low complexity: residues 102–114 (SSLAGGPSGAAAP) and 143–160 (PADVVPAANAAPNGNGKP). A domain III, AAA+ region region spans residues 173–389 (RLNDRYHFET…GALIRVTAFA (217 aa)). ATP-binding residues include glycine 217, glycine 219, lysine 220, and threonine 221. Residues 390–515 (SLNRQTVDIE…NEIKRKQRGA (126 aa)) are domain IV, binds dsDNA.

The protein belongs to the DnaA family. In terms of assembly, oligomerizes as a right-handed, spiral filament on DNA at oriC.

Its subcellular location is the cytoplasm. Functionally, plays an essential role in the initiation and regulation of chromosomal replication. ATP-DnaA binds to the origin of replication (oriC) to initiate formation of the DNA replication initiation complex once per cell cycle. Binds the DnaA box (a 9 base pair repeat at the origin) and separates the double-stranded (ds)DNA. Forms a right-handed helical filament on oriC DNA; dsDNA binds to the exterior of the filament while single-stranded (ss)DNA is stabiized in the filament's interior. The ATP-DnaA-oriC complex binds and stabilizes one strand of the AT-rich DNA unwinding element (DUE), permitting loading of DNA polymerase. After initiation quickly degrades to an ADP-DnaA complex that is not apt for DNA replication. Binds acidic phospholipids. In Micrococcus luteus (strain ATCC 4698 / DSM 20030 / JCM 1464 / CCM 169 / CCUG 5858 / IAM 1056 / NBRC 3333 / NCIMB 9278 / NCTC 2665 / VKM Ac-2230) (Micrococcus lysodeikticus), this protein is Chromosomal replication initiator protein DnaA.